We begin with the raw amino-acid sequence, 284 residues long: MSTAVHIVRSVAALRAQVGAWRDEGLSVALVPTMGALHAGHLSLVKRGLELADRAVASVFVNPTQFGPNEDFARYPRQEELDAAALSSAGCHLLFAPDVAEMYPEGFATTVSVSGVSDGLCGAVRPGHFAGVATVVTKLLLQCLPDVALFGEKDYQQLAVIRRFARDLDIPVRIEGVPTLREDDGLAMSSRNAYMTPEQRAIAPWLIRALTGIADGLRAGAKAADLCPMAVSGLLKAGFDSVDYIEVRDAASLAPAEILDRPLRILAAARLGKTRLIDNIGVEP.

Position 34 to 41 (34 to 41 (MGALHAGH)) interacts with ATP. H41 acts as the Proton donor in catalysis. Q65 serves as a coordination point for (R)-pantoate. Position 65 (Q65) interacts with beta-alanine. 151 to 154 (GEKD) lines the ATP pocket. Q157 contributes to the (R)-pantoate binding site. Residues L180 and 188–191 (MSSR) each bind ATP.

It belongs to the pantothenate synthetase family. As to quaternary structure, homodimer.

Its subcellular location is the cytoplasm. It catalyses the reaction (R)-pantoate + beta-alanine + ATP = (R)-pantothenate + AMP + diphosphate + H(+). Its pathway is cofactor biosynthesis; (R)-pantothenate biosynthesis; (R)-pantothenate from (R)-pantoate and beta-alanine: step 1/1. Catalyzes the condensation of pantoate with beta-alanine in an ATP-dependent reaction via a pantoyl-adenylate intermediate. The protein is Pantothenate synthetase of Paramagnetospirillum magneticum (strain ATCC 700264 / AMB-1) (Magnetospirillum magneticum).